Reading from the N-terminus, the 436-residue chain is 3-ketoacyl-CoA thiolase (436 aa).

Cys-99 (acyl-thioester intermediate) is an active-site residue. Catalysis depends on proton acceptor residues His-392 and Cys-422.

Belongs to the thiolase-like superfamily. Thiolase family. As to quaternary structure, heterotetramer of two alpha chains (FadJ) and two beta chains (FadI).

It localises to the cytoplasm. It carries out the reaction an acyl-CoA + acetyl-CoA = a 3-oxoacyl-CoA + CoA. Its pathway is lipid metabolism; fatty acid beta-oxidation. Functionally, catalyzes the final step of fatty acid oxidation in which acetyl-CoA is released and the CoA ester of a fatty acid two carbons shorter is formed. The chain is 3-ketoacyl-CoA thiolase from Shigella dysenteriae serotype 1 (strain Sd197).